A 49-amino-acid polypeptide reads, in one-letter code: Large ribosomal subunit protein uL16 (49 aa).

This sequence belongs to the universal ribosomal protein uL16 family. Part of the 50S ribosomal subunit.

Functionally, binds 23S rRNA and is also seen to make contacts with the A and possibly P site tRNAs. This Aquifex pyrophilus protein is Large ribosomal subunit protein uL16 (rplP).